Consider the following 216-residue polypeptide: Endo-1,4-beta-xylanase 1 (216 aa).

The signal sequence occupies residues 1–19 (MFLTSVVSLVVGAISCVSA). The GH11 domain maps to 29–216 (QMTPRNSCYG…SSGSASITVS (188 aa)). Glutamate 112 acts as the Nucleophile in catalysis. Glutamate 203 serves as the catalytic Proton donor.

This sequence belongs to the glycosyl hydrolase 11 (cellulase G) family.

Its subcellular location is the secreted. The enzyme catalyses Endohydrolysis of (1-&gt;4)-beta-D-xylosidic linkages in xylans.. The protein operates within glycan degradation; xylan degradation. Functionally, endo-1,4-beta-xylanase involved in the hydrolysis of xylan, a major structural heterogeneous polysaccharide found in plant biomass representing the second most abundant polysaccharide in the biosphere, after cellulose. This is Endo-1,4-beta-xylanase 1 (xyl1) from Claviceps purpurea (Ergot fungus).